The primary structure comprises 131 residues: Large-conductance mechanosensitive channel (131 aa).

2 consecutive transmembrane segments (helical) span residues 14–34 (VIDL…VTSL) and 67–87 (GSFI…FIFI).

The protein belongs to the MscL family. Homopentamer.

The protein resides in the cell membrane. In terms of biological role, channel that opens in response to stretch forces in the membrane lipid bilayer. May participate in the regulation of osmotic pressure changes within the cell. The polypeptide is Large-conductance mechanosensitive channel (Bacillus pumilus (strain SAFR-032)).